The sequence spans 832 residues: Conserved oligomeric Golgi complex subunit 5 (832 aa).

2 stretches are compositionally biased toward pro residues: residues 1–11 (MALPPSSPSPS) and 23–38 (NPPP…PPQT). A disordered region spans residues 1-49 (MALPPSSPSPSSPSLQRLSTFKNPPPSSLSSGAPPPQTPSSSSSSPLDS). Low complexity predominate over residues 39-49 (PSSSSSSPLDS).

It belongs to the COG5 family. As to quaternary structure, homodimer. Component of the conserved oligomeric Golgi complex which is composed of eight different subunits and is required for normal Golgi morphology and localization. Interacts with COG3, COG6, COG7 and COG8.

The protein resides in the golgi apparatus membrane. In terms of biological role, required for normal Golgi function. The chain is Conserved oligomeric Golgi complex subunit 5 from Arabidopsis thaliana (Mouse-ear cress).